Here is a 65-residue protein sequence, read N- to C-terminus: Mating-type pheromone BBP1(2) (65 aa).

C62 is subject to Cysteine methyl ester. Residue C62 is the site of S-farnesyl cysteine attachment. Residues 63 to 65 (VVA) constitute a propeptide, removed in mature form.

The protein localises to the cell membrane. Functionally, activates B-regulated development. This is Mating-type pheromone BBP1(2) (BBP1(2)) from Schizophyllum commune (Split gill fungus).